A 206-amino-acid polypeptide reads, in one-letter code: Small ribosomal subunit protein uS4 (206 aa).

The S4 RNA-binding domain occupies 96-158 (SRLDNVVYRM…AKKQSRIKAA (63 aa)).

It belongs to the universal ribosomal protein uS4 family. Part of the 30S ribosomal subunit. Contacts protein S5. The interaction surface between S4 and S5 is involved in control of translational fidelity.

Functionally, one of the primary rRNA binding proteins, it binds directly to 16S rRNA where it nucleates assembly of the body of the 30S subunit. With S5 and S12 plays an important role in translational accuracy. The chain is Small ribosomal subunit protein uS4 from Wigglesworthia glossinidia brevipalpis.